The chain runs to 193 residues: Ferredoxin-2, mitochondrial (193 aa).

Residues 38 to 70 are disordered; it reads QATPEKLETSNEEEGSSSAQITAGVESDAENQR. Positions 78–180 constitute a 2Fe-2S ferredoxin-type domain; the sequence is VEVVFLDRSG…GAEFTLPKIT (103 aa). Residues C115, C121, C124, and C161 each coordinate [2Fe-2S] cluster.

Belongs to the adrenodoxin/putidaredoxin family. Component of the mitochondrial core iron-sulfur cluster (ISC) complex composed of NFS1, LYRM4, NDUFAB1, ISCU, FXN, and FDX2; this complex is a heterohexamer containing two copies of each monomer. [2Fe-2S] cluster serves as cofactor.

It localises to the mitochondrion. It is found in the mitochondrion matrix. Electron donor, of the core iron-sulfur cluster (ISC) assembly complex, that acts to reduce the persulfide into sulfide during [2Fe-2S] clusters assembly on the scaffolding protein ISCU. The core iron-sulfur cluster (ISC) assembly complex is involved in the de novo synthesis of a [2Fe-2S] cluster, the first step of the mitochondrial iron-sulfur protein biogenesis. This process is initiated by the cysteine desulfurase complex (NFS1:LYRM4:NDUFAB1) that produces persulfide which is delivered on the scaffold protein ISCU in a FXN-dependent manner. Then this complex is stabilized by FDX2 which provides reducing equivalents to accomplish the [2Fe-2S] cluster assembly. Finally, the [2Fe-2S] cluster is transferred from ISCU to chaperone proteins, including HSCB, HSPA9 and GLRX5. Essential for coenzyme Q biosynthesis: together with FDXR, transfers the electrons required for the hydroxylation reaction performed by COQ6. This Xenopus laevis (African clawed frog) protein is Ferredoxin-2, mitochondrial.